A 128-amino-acid chain; its full sequence is Large ribosomal subunit protein bL12 (128 aa).

It belongs to the bacterial ribosomal protein bL12 family. Homodimer. Part of the ribosomal stalk of the 50S ribosomal subunit. Forms a multimeric L10(L12)X complex, where L10 forms an elongated spine to which 2 to 4 L12 dimers bind in a sequential fashion. Binds GTP-bound translation factors.

Forms part of the ribosomal stalk which helps the ribosome interact with GTP-bound translation factors. Is thus essential for accurate translation. The polypeptide is Large ribosomal subunit protein bL12 (Desulfosudis oleivorans (strain DSM 6200 / JCM 39069 / Hxd3) (Desulfococcus oleovorans)).